Consider the following 408-residue polypeptide: UDP-N-acetylglucosamine--N-acetylmuramyl-(pentapeptide) pyrophosphoryl-undecaprenol N-acetylglucosamine transferase (408 aa).

The interval 1-20 (MNDTVKKPTGGRGDDPLPAG) is disordered. Residues 41-43 (TAG), Asn-160, Arg-197, Ser-231, and Gln-327 contribute to the UDP-N-acetyl-alpha-D-glucosamine site.

This sequence belongs to the glycosyltransferase 28 family. MurG subfamily.

It is found in the cell membrane. The catalysed reaction is di-trans,octa-cis-undecaprenyl diphospho-N-acetyl-alpha-D-muramoyl-L-alanyl-D-glutamyl-meso-2,6-diaminopimeloyl-D-alanyl-D-alanine + UDP-N-acetyl-alpha-D-glucosamine = di-trans,octa-cis-undecaprenyl diphospho-[N-acetyl-alpha-D-glucosaminyl-(1-&gt;4)]-N-acetyl-alpha-D-muramoyl-L-alanyl-D-glutamyl-meso-2,6-diaminopimeloyl-D-alanyl-D-alanine + UDP + H(+). The protein operates within cell wall biogenesis; peptidoglycan biosynthesis. In terms of biological role, cell wall formation. Catalyzes the transfer of a GlcNAc subunit on undecaprenyl-pyrophosphoryl-MurNAc-pentapeptide (lipid intermediate I) to form undecaprenyl-pyrophosphoryl-MurNAc-(pentapeptide)GlcNAc (lipid intermediate II). The sequence is that of UDP-N-acetylglucosamine--N-acetylmuramyl-(pentapeptide) pyrophosphoryl-undecaprenol N-acetylglucosamine transferase from Mycolicibacterium paratuberculosis (strain ATCC BAA-968 / K-10) (Mycobacterium paratuberculosis).